Consider the following 254-residue polypeptide: PF03932 family protein CutC (254 aa).

It belongs to the CutC family.

The protein localises to the cytoplasm. The polypeptide is PF03932 family protein CutC (Yersinia pestis bv. Antiqua (strain Angola)).